A 763-amino-acid polypeptide reads, in one-letter code: Protein CHROMATIN REMODELING 19 (763 aa).

2 disordered regions span residues 1–43 (MKRD…TPSI) and 114–149 (EDEE…RGED). Residues 23–34 (VLKRPRTPKKTR) show a composition bias toward basic residues. The span at 114 to 135 (EDEEASDDDDDEAESSASEDEF) shows a compositional bias: acidic residues. In terms of domain architecture, Helicase ATP-binding spans 226 to 404 (LLYKKGIEGA…WSLLEFMLPD (179 aa)). 239–246 (DEMGLGKT) is an ATP binding site. The short motif at 353-356 (DEAH) is the DEAH box element. The stretch at 462–482 (RKQEDAYKEAIEEYRAASQAR) forms a coiled coil. The Nuclear localization signal signature appears at 520–527 (IRRIYSDE). Positions 592 to 742 (TLAELLPSMK…AAVLESGVHV (151 aa)) constitute a Helicase C-terminal domain.

This sequence belongs to the SNF2/RAD54 helicase family. In terms of assembly, interacts with SUVR2 and itself.

It is found in the nucleus. Functionally, DNA helicase that possesses intrinsic ATP-dependent nucleosome-remodeling activity and is both required for DNA repair and heterochromatin organization. Promotes DNA end resection of double-strand breaks (DSBs) following DNA damage: probably acts by weakening histone DNA interactions in nucleosomes flanking DSBs. Probable chromatin remodeling factor. Probable helicase-like transcription factor involved in transcriptional gene silencing. Associates with SUVR2 and contributes to transcriptional gene silencing at RNA-directed DNA methylation (RdDM) target loci but also at RdDM-independent target loci. May be involved in nucleosome positioning to form ordered nucleosome arrays on chromatin. This is Protein CHROMATIN REMODELING 19 from Arabidopsis thaliana (Mouse-ear cress).